A 531-amino-acid chain; its full sequence is Retinoid isomerohydrolase (531 aa).

The S-palmitoyl cysteine; in membrane form moiety is linked to residue Cys-112. Fe cation-binding residues include His-180, His-241, and His-313. Cys-329 carries S-palmitoyl cysteine; in membrane form lipidation. His-526 contacts Fe cation.

This sequence belongs to the carotenoid oxygenase family. Fe(2+) serves as cofactor. Palmitoylated. Retinal pigment epithelium-specific.

Its subcellular location is the cytoplasm. It is found in the cell membrane. It carries out the reaction an all-trans-retinyl ester + H2O = 11-cis-retinol + a fatty acid + H(+). The catalysed reaction is lutein = (3R,3'S)-zeaxanthin. The enzyme catalyses all-trans-retinyl hexadecanoate + H2O = 11-cis-retinol + hexadecanoate + H(+). In terms of biological role, plays important roles in the production of 11-cis retinal and in visual pigment regeneration. Capable of catalyzing the isomerization of lutein to meso-zeaxanthin an eye-specific carotenoid. In Danio rerio (Zebrafish), this protein is Retinoid isomerohydrolase (rpe65a).